The chain runs to 234 residues: MESSVDEEALHQLYLWVDNIPLSRPKRNLSRDFSDGVLVAELIKFYFPKMVEMHNYVPANSLQQKLSNWGHLNRKVLNKLNFSVPDDVMRKIAQCSPGVVELVLIPLRQRLEERQRRQKLGVGSLQELAPQDSSGYMDMGLPQKVRGEGAPALGEQLREGRPLASRPPGYNQALQGDPSFVLQIAEKEQELLASQETVQVLQMKVKRLEHLLQLKNVRIDDLSRRLQQAERKQR.

Residues 7–112 (EEALHQLYLW…VLIPLRQRLE (106 aa)) form the Calponin-homology (CH) domain. Residues 181–234 (VLQIAEKEQELLASQETVQVLQMKVKRLEHLLQLKNVRIDDLSRRLQQAERKQR) form an essential for homodimerization and microtubule bundling activity region.

In terms of assembly, homodimer. Interacts with actin, TJP1, CGN and CDH1. In terms of tissue distribution, expressed predominantly in the seminiferous epithelium of adult testis. Expressed in pillar cells of the organ of Corti (at protein level). Expressed in brain, kidney, lung and testis. Highly expressed in the trachea, lung and oviduct.

The protein resides in the cytoplasm. It localises to the cell projection. The protein localises to the cilium. It is found in the flagellum. Its subcellular location is the cytoskeleton. The protein resides in the cilium axoneme. It localises to the apical cell membrane. The protein localises to the basolateral cell membrane. It is found in the stress fiber. Its subcellular location is the microvillus. The protein resides in the lamellipodium. It localises to the filopodium. Microtubule-associated protein that promotes microtubule bundling and stabilizes microtubules against depolymerization in response to cold shock. Microtubule-associated protein involved in the stabilization of microtubules along the axis of migration during radial intercalation. Promotes the establishment and stabilization of an axis of microtubules required for the active migration of cells into the outer epithelium. Essential for ciliary central apparatus formation which requires both its microtubule-binding and bundling activities and for ciliary localization of HYDIN and SPAG6 in ependymal cilia. Binds actin in intestinal epithelial cells (IECs), essential for IECs survival and contributes to formation of filopodia and lamellipodia in migrating IECs. Regulates planar cell polarity signaling pathway and asymmetric microtubule accumulation in ciliated epithelia. This Mus musculus (Mouse) protein is Sperm flagellar protein 1 (Spef1).